The following is a 289-amino-acid chain: G1/S-specific cyclin-D2 (289 aa).

Positions 26 to 151 (VLQNLLTIEE…VVLGKLKWNL (126 aa)) constitute a Cyclin N-terminal domain. Residues 264 to 289 (DQRDGSKSEDELDQASTPTDVRDIDL) are disordered. A Phosphoserine modification is found at serine 271. Threonine 280 is subject to Phosphothreonine.

The protein belongs to the cyclin family. Cyclin D subfamily. In terms of assembly, interacts with either CDK4 or CDK6 protein kinase to form a serine/threonine kinase holoenzyme complex. The cyclin subunit imparts substrate specificity to the complex. Post-translationally, phosphorylation at Thr-280 by MAP kinases is required for ubiquitination and degradation by the DCX(AMBRA1) complex. Ubiquitinated by the DCX(AMBRA1) complex during the transition from G1 to S cell phase, leading to its degradation: ubiquitination is dependent on Thr-280 phosphorylation. The DCX(AMBRA1) complex represents the major regulator of CCND2 stability during the G1/S transition. Polyubiquitinated by the SCF(FBXL2) complex, leading to proteasomal degradation.

The protein localises to the nucleus. It is found in the cytoplasm. Its subcellular location is the nucleus membrane. Functionally, regulatory component of the cyclin D2-CDK4 (DC) complex that phosphorylates and inhibits members of the retinoblastoma (RB) protein family including RB1 and regulates the cell-cycle during G(1)/S transition. Phosphorylation of RB1 allows dissociation of the transcription factor E2F from the RB/E2F complex and the subsequent transcription of E2F target genes which are responsible for the progression through the G(1) phase. Hypophosphorylates RB1 in early G(1) phase. Cyclin D-CDK4 complexes are major integrators of various mitogenenic and antimitogenic signals. The polypeptide is G1/S-specific cyclin-D2 (Homo sapiens (Human)).